The sequence spans 142 residues: Hemoglobin subunit alpha (142 aa).

The Globin domain occupies 2–142 (VLSAADKTNV…VSTVLTSKYR (141 aa)). The residue at position 4 (serine 4) is a Phosphoserine. Residue lysine 8 is modified to N6-succinyllysine. The residue at position 9 (threonine 9) is a Phosphothreonine. Lysine 12 is modified (N6-succinyllysine). Lysine 17 is subject to N6-acetyllysine; alternate. Residue lysine 17 is modified to N6-succinyllysine; alternate. Lysine 41 bears the N6-succinyllysine mark. Serine 50 is subject to Phosphoserine. Histidine 59 lines the O2 pocket. Residue histidine 88 coordinates heme b. At serine 103 the chain carries Phosphoserine. Phosphothreonine is present on threonine 109. Serine 125 is subject to Phosphoserine. Phosphothreonine occurs at positions 135 and 138. Position 139 is a phosphoserine (serine 139).

This sequence belongs to the globin family. Heterotetramer of two alpha chains and two beta chains. As to expression, red blood cells.

Functionally, involved in oxygen transport from the lung to the various peripheral tissues. Hemopressin acts as an antagonist peptide of the cannabinoid receptor CNR1. Hemopressin-binding efficiently blocks cannabinoid receptor CNR1 and subsequent signaling. This chain is Hemoglobin subunit alpha (HBA), found in Equus zebra (Mountain zebra).